The chain runs to 156 residues: UPF0178 protein Jann_2168 (156 aa).

Belongs to the UPF0178 family.

The sequence is that of UPF0178 protein Jann_2168 from Jannaschia sp. (strain CCS1).